A 107-amino-acid chain; its full sequence is L-rhamnose mutarotase (107 aa).

Substrate is bound at residue Tyr-18. The Proton donor role is filled by His-22. Residues Tyr-41 and 76–77 (WW) contribute to the substrate site.

Belongs to the rhamnose mutarotase family. Homodimer.

Its subcellular location is the cytoplasm. It catalyses the reaction alpha-L-rhamnose = beta-L-rhamnose. The protein operates within carbohydrate metabolism; L-rhamnose metabolism. Its function is as follows. Involved in the anomeric conversion of L-rhamnose. This chain is L-rhamnose mutarotase, found in Paraburkholderia phytofirmans (strain DSM 17436 / LMG 22146 / PsJN) (Burkholderia phytofirmans).